A 236-amino-acid polypeptide reads, in one-letter code: Leucyl/phenylalanyl-tRNA--protein transferase (236 aa).

Over residues 1–13 the composition is skewed to polar residues; sequence MNSLSYLNQDQQS. The tract at residues 1–22 is disordered; that stretch reads MNSLSYLNQDQQSFPPPEQALS.

It belongs to the L/F-transferase family.

It localises to the cytoplasm. The catalysed reaction is N-terminal L-lysyl-[protein] + L-leucyl-tRNA(Leu) = N-terminal L-leucyl-L-lysyl-[protein] + tRNA(Leu) + H(+). It carries out the reaction N-terminal L-arginyl-[protein] + L-leucyl-tRNA(Leu) = N-terminal L-leucyl-L-arginyl-[protein] + tRNA(Leu) + H(+). It catalyses the reaction L-phenylalanyl-tRNA(Phe) + an N-terminal L-alpha-aminoacyl-[protein] = an N-terminal L-phenylalanyl-L-alpha-aminoacyl-[protein] + tRNA(Phe). Functions in the N-end rule pathway of protein degradation where it conjugates Leu, Phe and, less efficiently, Met from aminoacyl-tRNAs to the N-termini of proteins containing an N-terminal arginine or lysine. The polypeptide is Leucyl/phenylalanyl-tRNA--protein transferase (Shewanella piezotolerans (strain WP3 / JCM 13877)).